The following is a 335-amino-acid chain: Cathepsin B (335 aa).

Residues 1–19 (MWQLLATLSCLLVLTSARS) form the signal peptide. A propeptide spans 20–79 (SLHFPPLSDEMVNYVNKQNTTWKAGHNFYNVDLSYVKKLCGAILGGPKLPQRDAFAADMV) (activation peptide). Cystine bridges form between cysteine 93–cysteine 122, cysteine 105–cysteine 150, cysteine 141–cysteine 207, cysteine 142–cysteine 146, cysteine 179–cysteine 211, and cysteine 187–cysteine 198. Cysteine 108 is a catalytic residue. Residue asparagine 192 is glycosylated (N-linked (GlcNAc...) asparagine). N6-acetyllysine is present on lysine 220. Active-site residues include histidine 278 and asparagine 298. The propeptide occupies 333–335 (HQH).

Belongs to the peptidase C1 family. Dimer of a heavy chain and a light chain cross-linked by a disulfide bond. Interacts with SRPX2. Directly interacts with SHKBP1.

It localises to the lysosome. Its subcellular location is the melanosome. The protein resides in the secreted. The protein localises to the extracellular space. It is found in the apical cell membrane. It catalyses the reaction Hydrolysis of proteins with broad specificity for peptide bonds. Preferentially cleaves -Arg-Arg-|-Xaa bonds in small molecule substrates (thus differing from cathepsin L). In addition to being an endopeptidase, shows peptidyl-dipeptidase activity, liberating C-terminal dipeptides.. Its function is as follows. Thiol protease which is believed to participate in intracellular degradation and turnover of proteins. Cleaves matrix extracellular phosphoglycoprotein MEPE. Involved in the solubilization of cross-linked TG/thyroglobulin in the thyroid follicle lumen. Has also been implicated in tumor invasion and metastasis. This is Cathepsin B (CTSB) from Ovis aries (Sheep).